A 372-amino-acid chain; its full sequence is Alanine dehydrogenase 2 (372 aa).

The active site involves His95. 169 to 199 (KVTIIGGGQAGTNAAKIALGLGADVTILDVN) provides a ligand contact to NAD(+).

The protein belongs to the AlaDH/PNT family.

It catalyses the reaction L-alanine + NAD(+) + H2O = pyruvate + NH4(+) + NADH + H(+). The protein operates within amino-acid degradation; L-alanine degradation via dehydrogenase pathway; NH(3) and pyruvate from L-alanine: step 1/1. Functionally, may play a role in cell wall synthesis as L-alanine is an important constituent of the peptidoglycan layer. This chain is Alanine dehydrogenase 2 (ald2), found in Staphylococcus aureus (strain MRSA252).